A 1756-amino-acid chain; its full sequence is Transposon Ty1-BR Gag-Pol polyprotein (1756 aa).

Polar residues-rich tracts occupy residues 1–10, 48–60, and 127–152; these read MESQQLSNYP, TKANSQQTTTPAS, and QSQFPQYPSSVGTPLSTPSPESGNTF. Disordered regions lie at residues 1 to 93, 126 to 173, and 352 to 421; these read MESQ…MMTQ, PQSQ…RPPP, and GSRN…SKST. The segment covering 153–165 has biased composition (low complexity); it reads TDSSSADSDMTST. The tract at residues 299–401 is RNA-binding; that stretch reads NNGIHINNKV…NSKSKTARAH (103 aa). A compositionally biased stretch (low complexity) spans 402 to 418; that stretch reads NVSTSNNSPSTDNDSIS. Ser416 carries the phosphoserine modification. Asp461 functions as the For protease activity; shared with dimeric partner in the catalytic mechanism. The tract at residues 583–640 is integrase-type zinc finger-like; it reads NVHTSESTRKYPYPFIHRMLAHANAQTIRYSLKNNTITYFNESDVDWSSAIDYQCPDC. In terms of domain architecture, Integrase catalytic spans 660–835; that stretch reads NSYEPFQYLH…AGLDISTLLP (176 aa). Residues Asp671 and Asp736 each contribute to the Mg(2+) site. 2 disordered regions span residues 956–1088 and 1142–1173; these read SKAV…TEKR and PTELSDSFKELPPINSRQTNSSLGGIGDSNAY. Over residues 960-969 the composition is skewed to low complexity; the sequence is SPTDSTPPST. Polar residues-rich tracts occupy residues 1005–1017 and 1031–1043; these read STPQISDIESTDS and MSQSNTHESSYAS. Positions 1044–1053 are enriched in basic and acidic residues; sequence KSKDFRHSDS. The segment covering 1054–1082 has biased composition (polar residues); the sequence is YSDNETNHTNVPISSTGGTNNKTVPQTSE. The Bipartite nuclear localization signal motif lies at 1179–1213; sequence KKRSLEDNETEIKVSRDTWNTKNMRSLEPPRSKKR. A Reverse transcriptase Ty1/copia-type domain is found at 1339–1477; sequence NNYYITQLDI…DILGLEIKYQ (139 aa). The Mg(2+) site is built by Asp1347, Asp1428, Asp1429, Asp1611, Glu1653, and Asp1686. Residues 1611–1753 enclose the RNase H Ty1/copia-type domain; the sequence is DASYGNQPYY…IKTFKLLTNK (143 aa).

The capsid protein forms a homotrimer, from which the VLPs are assembled. The protease is a homodimer, whose active site consists of two apposed aspartic acid residues. In terms of processing, initially, virus-like particles (VLPs) are composed of the structural unprocessed proteins Gag and Gag-Pol, and also contain the host initiator methionine tRNA (tRNA(i)-Met) which serves as a primer for minus-strand DNA synthesis, and a dimer of genomic Ty RNA. Processing of the polyproteins occurs within the particle and proceeds by an ordered pathway, called maturation. First, the protease (PR) is released by autocatalytic cleavage of the Gag-Pol polyprotein yielding capsid protein p45 and a Pol-p154 precursor protein. This cleavage is a prerequisite for subsequent processing of Pol-p154 at the remaining sites to release the mature structural and catalytic proteins. Maturation takes place prior to the RT reaction and is required to produce transposition-competent VLPs.

The protein resides in the cytoplasm. It localises to the nucleus. It catalyses the reaction DNA(n) + a 2'-deoxyribonucleoside 5'-triphosphate = DNA(n+1) + diphosphate. It carries out the reaction Endonucleolytic cleavage to 5'-phosphomonoester.. In terms of biological role, capsid protein (CA) is the structural component of the virus-like particle (VLP), forming the shell that encapsulates the retrotransposons dimeric RNA genome. The particles are assembled from trimer-clustered units and there are holes in the capsid shells that allow for the diffusion of macromolecules. CA also has nucleocapsid-like chaperone activity, promoting primer tRNA(i)-Met annealing to the multipartite primer-binding site (PBS), dimerization of Ty1 RNA and initiation of reverse transcription. The aspartyl protease (PR) mediates the proteolytic cleavages of the Gag and Gag-Pol polyproteins after assembly of the VLP. Its function is as follows. Reverse transcriptase/ribonuclease H (RT) is a multifunctional enzyme that catalyzes the conversion of the retro-elements RNA genome into dsDNA within the VLP. The enzyme displays a DNA polymerase activity that can copy either DNA or RNA templates, and a ribonuclease H (RNase H) activity that cleaves the RNA strand of RNA-DNA heteroduplexes during plus-strand synthesis and hydrolyzes RNA primers. The conversion leads to a linear dsDNA copy of the retrotransposon that includes long terminal repeats (LTRs) at both ends. Functionally, integrase (IN) targets the VLP to the nucleus, where a subparticle preintegration complex (PIC) containing at least integrase and the newly synthesized dsDNA copy of the retrotransposon must transit the nuclear membrane. Once in the nucleus, integrase performs the integration of the dsDNA into the host genome. This Saccharomyces cerevisiae (strain ATCC 204508 / S288c) (Baker's yeast) protein is Transposon Ty1-BR Gag-Pol polyprotein (TY1B-BR).